The following is a 180-amino-acid chain: Large ribosomal subunit protein uL5 (180 aa).

The protein belongs to the universal ribosomal protein uL5 family. Part of the 50S ribosomal subunit; part of the 5S rRNA/L5/L18/L25 subcomplex. Contacts the 5S rRNA and the P site tRNA. Forms a bridge to the 30S subunit in the 70S ribosome.

Functionally, this is one of the proteins that bind and probably mediate the attachment of the 5S RNA into the large ribosomal subunit, where it forms part of the central protuberance. In the 70S ribosome it contacts protein S13 of the 30S subunit (bridge B1b), connecting the 2 subunits; this bridge is implicated in subunit movement. Contacts the P site tRNA; the 5S rRNA and some of its associated proteins might help stabilize positioning of ribosome-bound tRNAs. This Chloroflexus aggregans (strain MD-66 / DSM 9485) protein is Large ribosomal subunit protein uL5.